Reading from the N-terminus, the 382-residue chain is Lipid-A-disaccharide synthase (382 aa).

It belongs to the LpxB family.

It catalyses the reaction 2-N,3-O-bis[(3R)-3-hydroxytetradecanoyl]-alpha-D-glucosaminyl 1-phosphate + UDP-2-N,3-O-bis[(3R)-3-hydroxytetradecanoyl]-alpha-D-glucosamine = lipid A disaccharide (E. coli) + UDP + H(+). The catalysed reaction is a lipid X + a UDP-2-N,3-O-bis[(3R)-3-hydroxyacyl]-alpha-D-glucosamine = a lipid A disaccharide + UDP + H(+). It functions in the pathway glycolipid biosynthesis; lipid IV(A) biosynthesis; lipid IV(A) from (3R)-3-hydroxytetradecanoyl-[acyl-carrier-protein] and UDP-N-acetyl-alpha-D-glucosamine: step 5/6. In terms of biological role, condensation of UDP-2,3-diacylglucosamine and 2,3-diacylglucosamine-1-phosphate to form lipid A disaccharide, a precursor of lipid A, a phosphorylated glycolipid that anchors the lipopolysaccharide to the outer membrane of the cell. In Sodalis glossinidius (strain morsitans), this protein is Lipid-A-disaccharide synthase.